Reading from the N-terminus, the 260-residue chain is Hemin import ATP-binding protein HmuV (260 aa).

Residues 6–242 (LSGRNISMKY…ERIEQVYGYR (237 aa)) form the ABC transporter domain. 38 to 45 (GPNGAGKS) is an ATP binding site.

Belongs to the ABC transporter superfamily. Heme (hemin) importer (TC 3.A.1.14.5) family. As to quaternary structure, the complex is composed of two ATP-binding proteins (HmuV), two transmembrane proteins (HmuU) and a solute-binding protein (HmuT).

The protein localises to the cell inner membrane. Its function is as follows. Part of the ABC transporter complex HmuTUV involved in hemin import. Responsible for energy coupling to the transport system. This is Hemin import ATP-binding protein HmuV from Vibrio parahaemolyticus serotype O3:K6 (strain RIMD 2210633).